We begin with the raw amino-acid sequence, 245 residues long: Biosynthetic peptidoglycan transglycosylase (245 aa).

A helical membrane pass occupies residues 20-42 (VYAGSVFAGAWLATQLFYLAQIA).

This sequence belongs to the glycosyltransferase 51 family.

It is found in the cell inner membrane. It catalyses the reaction [GlcNAc-(1-&gt;4)-Mur2Ac(oyl-L-Ala-gamma-D-Glu-L-Lys-D-Ala-D-Ala)](n)-di-trans,octa-cis-undecaprenyl diphosphate + beta-D-GlcNAc-(1-&gt;4)-Mur2Ac(oyl-L-Ala-gamma-D-Glu-L-Lys-D-Ala-D-Ala)-di-trans,octa-cis-undecaprenyl diphosphate = [GlcNAc-(1-&gt;4)-Mur2Ac(oyl-L-Ala-gamma-D-Glu-L-Lys-D-Ala-D-Ala)](n+1)-di-trans,octa-cis-undecaprenyl diphosphate + di-trans,octa-cis-undecaprenyl diphosphate + H(+). It participates in cell wall biogenesis; peptidoglycan biosynthesis. Functionally, peptidoglycan polymerase that catalyzes glycan chain elongation from lipid-linked precursors. The chain is Biosynthetic peptidoglycan transglycosylase from Burkholderia lata (strain ATCC 17760 / DSM 23089 / LMG 22485 / NCIMB 9086 / R18194 / 383).